The chain runs to 524 residues: MIQQALLSVSDKTGIVDFARALHERGVKLLSTGGTAKLLAESSLPVTEVADYTGFPEMLDGRVKTLHPKVHGGILARRDLPEHMAALSEHSIPTIDLLVVNLYPFQQTVAKDECSLADAIENIDIGGPTMLRSAAKNHRDVTVIVDPADYATVLAEMQANNNTVGYETNFMLAKKVFAHTAQYDGAITNYLTSLGADKSHSTRSAYPQTLNLAFDKVQEMRYGENPHQSAAFYRDLKAVDGALANYKQLQGKELSYNNIADADAAWECVKSFDAAHGAACVIIKHANPCGVAIGGTAQEAYEKAFKTDSTSAFGGIIAFNVPLDEAAAQVVAKQFVEVLIAPGFSEGARAVFAAKQNVRVLEIPLGKGVNAYDFKRVGGGLLVQSPDAKNVQPSELRVVTKRHPTPKEMDDLMFAWRVAKFVKSNAIVFCGGGMTLGVGAGQMSRVDSARIASIKAQNAGLTLAGSAVASDAFFPFRDGLDVVVDAGASCVIQPGGSVRDDEVIAAADERNVAMIFTGTRHFRH.

The 145-residue stretch at 1-145 (MIQQALLSVS…KNHRDVTVIV (145 aa)) folds into the MGS-like domain.

It belongs to the PurH family.

It carries out the reaction (6R)-10-formyltetrahydrofolate + 5-amino-1-(5-phospho-beta-D-ribosyl)imidazole-4-carboxamide = 5-formamido-1-(5-phospho-D-ribosyl)imidazole-4-carboxamide + (6S)-5,6,7,8-tetrahydrofolate. The catalysed reaction is IMP + H2O = 5-formamido-1-(5-phospho-D-ribosyl)imidazole-4-carboxamide. It functions in the pathway purine metabolism; IMP biosynthesis via de novo pathway; 5-formamido-1-(5-phospho-D-ribosyl)imidazole-4-carboxamide from 5-amino-1-(5-phospho-D-ribosyl)imidazole-4-carboxamide (10-formyl THF route): step 1/1. Its pathway is purine metabolism; IMP biosynthesis via de novo pathway; IMP from 5-formamido-1-(5-phospho-D-ribosyl)imidazole-4-carboxamide: step 1/1. The chain is Bifunctional purine biosynthesis protein PurH from Ralstonia pickettii (strain 12J).